Consider the following 165-residue polypeptide: Basic leucine zipper 43 (165 aa).

One can recognise a bZIP domain in the interval 70 to 133 (NERKQKRKIS…EKVIEENVQL (64 aa)). Residues 72–93 (RKQKRKISNRESARRSRMRKQR) are basic motif. A leucine-zipper region spans residues 98 to 112 (LWSQVMWLRDENHQL).

Forms heterodimers with BZIP34 and BZIP61.

The protein resides in the nucleus. Probable transcription factor involved in somatic embryogenesis. Acts as a positive regulator of BHLH109. The sequence is that of Basic leucine zipper 43 from Arabidopsis thaliana (Mouse-ear cress).